Reading from the N-terminus, the 524-residue chain is Cytochrome P450 4F3 (524 aa).

Residues 15 to 35 (AASPWLLLLLVGASCLLAYIL) traverse the membrane as a helical segment. Cys-468 provides a ligand contact to heme.

Belongs to the cytochrome P450 family. Heme is required as a cofactor.

The protein localises to the endoplasmic reticulum membrane. Its subcellular location is the microsome membrane. It carries out the reaction leukotriene B4 + reduced [NADPH--hemoprotein reductase] + O2 = 18-hydroxy-leukotriene B4 + oxidized [NADPH--hemoprotein reductase] + H2O + H(+). The enzyme catalyses leukotriene B4 + reduced [NADPH--hemoprotein reductase] + O2 = 19-hydroxy-leukotriene B4 + oxidized [NADPH--hemoprotein reductase] + H2O + H(+). It functions in the pathway lipid metabolism; leukotriene B4 degradation. Functionally, a cytochrome P450 monooxygenase involved in the metabolism of the pro-inflammatory lipid mediator leukotriene B4 (LTB4). Hydroxylates at the omega-1 and omega-2 positions LTB4. This oxidation step leads to LTB4 inactivation, which is postulated to be a crucial part of the resolution of inflammation. Mechanistically, uses molecular oxygen inserting one oxygen atom into a substrate, and reducing the second into a water molecule, with two electrons provided by NADPH via cytochrome P450 reductase (CPR; NADPH-ferrihemoprotein reductase). This Rattus norvegicus (Rat) protein is Cytochrome P450 4F3.